Reading from the N-terminus, the 365-residue chain is UBX domain-containing protein 2B (365 aa).

Residues 1 to 97 (MADGGASPAQ…MSDDKENQRF (97 aa)) form a disordered region. 2 stretches are compositionally biased toward basic and acidic residues: residues 50–63 (DEAK…DKPT) and 73–95 (LKID…KENQ). One can recognise an SEP domain in the interval 175–240 (DVQILLKLWR…MEDHQEQEYV (66 aa)). One can recognise a UBX domain in the interval 286–363 (DSVPATKIQI…DILNTVILQQ (78 aa)).

Belongs to the NSFL1C family.

The protein localises to the nucleus. It localises to the cytoplasm. The protein resides in the cytosol. Its subcellular location is the endoplasmic reticulum. It is found in the golgi apparatus. The protein localises to the cytoskeleton. It localises to the microtubule organizing center. The protein resides in the centrosome. In terms of biological role, adapter protein required for Golgi and endoplasmic reticulum biogenesis. Involved in Golgi and endoplasmic reticulum maintenance during interphase and in their reassembly at the end of mitosis. Regulates the centrosomal levels of kinase AURKA/Aurora A during mitotic progression by promoting AURKA removal from centrosomes in prophase. Also, regulates spindle orientation during mitosis. This Gallus gallus (Chicken) protein is UBX domain-containing protein 2B (UBXN2B).